The chain runs to 676 residues: UvrABC system protein B (676 aa).

The 389-residue stretch at 26–414 (EGLDAGLAHQ…SAGEIADQVV (389 aa)) folds into the Helicase ATP-binding domain. Position 39–46 (39–46 (GVTGSGKT)) interacts with ATP. Positions 92–115 (YYDYYQPEAYVPTTDTFIEKDASV) match the Beta-hairpin motif. The Helicase C-terminal domain occupies 432-598 (QVDDLLSEIR…ALKRNIKDIM (167 aa)). One can recognise a UVR domain in the interval 636 to 671 (EKEISRLEAAMYQHAQDLEFELAAEKRDEIEKLRAQ).

It belongs to the UvrB family. As to quaternary structure, forms a heterotetramer with UvrA during the search for lesions. Interacts with UvrC in an incision complex.

It localises to the cytoplasm. In terms of biological role, the UvrABC repair system catalyzes the recognition and processing of DNA lesions. A damage recognition complex composed of 2 UvrA and 2 UvrB subunits scans DNA for abnormalities. Upon binding of the UvrA(2)B(2) complex to a putative damaged site, the DNA wraps around one UvrB monomer. DNA wrap is dependent on ATP binding by UvrB and probably causes local melting of the DNA helix, facilitating insertion of UvrB beta-hairpin between the DNA strands. Then UvrB probes one DNA strand for the presence of a lesion. If a lesion is found the UvrA subunits dissociate and the UvrB-DNA preincision complex is formed. This complex is subsequently bound by UvrC and the second UvrB is released. If no lesion is found, the DNA wraps around the other UvrB subunit that will check the other stand for damage. In Vibrio parahaemolyticus serotype O3:K6 (strain RIMD 2210633), this protein is UvrABC system protein B.